The chain runs to 321 residues: Thioredoxin reductase tcpT (321 aa).

FAD is bound by residues 14 to 17 (GGPA), 36 to 41 (DSGRYR), His49, and Ala114. Residues Cys138 and Cys141 are joined by a disulfide bond. FAD-binding positions include Asp282 and 289–290 (NV).

Belongs to the class-II pyridine nucleotide-disulfide oxidoreductase family. Homodimer. FAD is required as a cofactor.

It functions in the pathway secondary metabolite biosynthesis. Its function is as follows. Thioredoxin reductase; part of the gene cluster that mediates the biosynthesis of an unusual class of epipolythiodioxopiperazines (ETPs) lacking the reactive thiol group important for toxicity. Firstly, L-tyrosine is prenylated by tcpD, before undergoing condensation with L-glycine in a reaction catalyzed by the NRPS tcpP leading to the diketopiperazine (DKP) backbone. Afterwards the alpha-carbon of tyrosine is oxidized by the cytochrome P450 tcpC to form a hydroxyl group. However, in contrast other ETP biosynthesis pathways studied so far, tcpC is not able to bishydroxylate the DKP at both alpha-carbon positions, but hydroxylates the alpha-carbon of the tyrosine part and the nitrogen of the glycine part. The next steps involve an alpha,beta-elimination reaction catalyzed by tcpI, a methylation by the methyltransferase tcpN the action of the four enzyme cascade tcpG/K/J/I. Due to a dysfunctional cytochrome P450 monooxygenase tcpC, the pathway leads to the biosynthesis of probable non-toxic metabolites lacking the reactive thiol group. This Claviceps purpurea (strain 20.1) (Ergot fungus) protein is Thioredoxin reductase tcpT.